The sequence spans 467 residues: 3-isopropylmalate dehydratase large subunit (467 aa).

[4Fe-4S] cluster is bound by residues Cys-347, Cys-407, and Cys-410.

It belongs to the aconitase/IPM isomerase family. LeuC type 1 subfamily. As to quaternary structure, heterodimer of LeuC and LeuD. Requires [4Fe-4S] cluster as cofactor.

It catalyses the reaction (2R,3S)-3-isopropylmalate = (2S)-2-isopropylmalate. It participates in amino-acid biosynthesis; L-leucine biosynthesis; L-leucine from 3-methyl-2-oxobutanoate: step 2/4. Catalyzes the isomerization between 2-isopropylmalate and 3-isopropylmalate, via the formation of 2-isopropylmaleate. This chain is 3-isopropylmalate dehydratase large subunit, found in Trichormus variabilis (strain ATCC 29413 / PCC 7937) (Anabaena variabilis).